Reading from the N-terminus, the 900-residue chain is Zinc finger protein 574 (900 aa).

C2H2-type zinc fingers lie at residues 16-38 (YVCSECNQLYGSLEEVLVHQNSH), 76-98 (YQCLECGQLLLSPSQLLEHQELH), and 126-148 (YECVDCKALFASQEMWLSHRQTH). Serine 164 is modified (phosphoserine). A C2H2-type 4 zinc finger spans residues 213–235 (YKCSECSQLFQMPADFLEHQATH). Residues 244-254 (AEPATQQETQV) show a composition bias toward low complexity. The tract at residues 244-306 (AEPATQQETQ…RRNNSGESGG (63 aa)) is disordered. The segment covering 273 to 290 (HSYELRNELRNGEAIGRD) has biased composition (basic and acidic residues). Phosphoserine is present on serine 301. 10 consecutive C2H2-type zinc fingers follow at residues 312 to 334 (LFCSACDQLFLSPHQLQQHLRSH), 339 to 361 (FKCPLCSRVFPSPSSLDQHLGDH), 367 to 389 (FLCVDCGLAFGTEALLLAHRRAH), 395 to 416 (HSCPCGKTFVNLTKFLYHRRTH), 469 to 492 (YRCLLCSREFGKALQLTRHQRFVH), 498 to 520 (HKCSICGKMFKKKSHVRNHLRTH), 526 to 548 (FPCPDCSKPFNSPANLARHRLTH), 554 to 576 (YRCGDCGKAFTQSSTLRQHRLVH), 582 to 604 (YRCQECGVRFHRPYRLLMHRYHH), and 610 to 633 (YKCRECPRSFLLRRLLEVHQLVIH). The segment at 639–662 (YRCSSCGAAFPSSLRLREHRCAAA) adopts a C2H2-type 15; degenerate zinc-finger fold. The segment at 670–692 (FECGTCGKKVGSAARLQAHEAAH) adopts a C2H2-type 16 zinc-finger fold. The segment at 690 to 741 (AAHAAAGPGEVLAKEPPAPRASRATRTPVAPSPTALSGTTSAAPAAPARRRG) is disordered. Serine 721 carries the post-translational modification Phosphoserine. Low complexity predominate over residues 721–736 (SPTALSGTTSAAPAAP). Threonine 728 is subject to Phosphothreonine. 4 consecutive C2H2-type zinc fingers follow at residues 742–764 (PECSECKKLFSTETSLQVHRRIH), 770–792 (YPCPDCGKAFRQSTHLKDHRRLH), 798–820 (FACEVCGKAFAISMRLAEHRRIH), and 826–848 (YSCPDCGKSYRSFSNLWKHRKTH). Position 836 is an asymmetric dimethylarginine (arginine 836).

The protein belongs to the krueppel C2H2-type zinc-finger protein family.

It is found in the nucleus. Its function is as follows. May be involved in transcriptional regulation. This chain is Zinc finger protein 574 (Znf574), found in Mus musculus (Mouse).